We begin with the raw amino-acid sequence, 281 residues long: 2-dehydro-3-deoxyphosphooctonate aldolase (281 aa).

It belongs to the KdsA family.

The protein resides in the cytoplasm. The enzyme catalyses D-arabinose 5-phosphate + phosphoenolpyruvate + H2O = 3-deoxy-alpha-D-manno-2-octulosonate-8-phosphate + phosphate. Its pathway is carbohydrate biosynthesis; 3-deoxy-D-manno-octulosonate biosynthesis; 3-deoxy-D-manno-octulosonate from D-ribulose 5-phosphate: step 2/3. It functions in the pathway bacterial outer membrane biogenesis; lipopolysaccharide biosynthesis. The protein is 2-dehydro-3-deoxyphosphooctonate aldolase of Pseudomonas putida (strain GB-1).